The sequence spans 172 residues: Large ribosomal subunit protein uL10 (172 aa).

This sequence belongs to the universal ribosomal protein uL10 family. Part of the ribosomal stalk of the 50S ribosomal subunit. The N-terminus interacts with L11 and the large rRNA to form the base of the stalk. The C-terminus forms an elongated spine to which L12 dimers bind in a sequential fashion forming a multimeric L10(L12)X complex.

In terms of biological role, forms part of the ribosomal stalk, playing a central role in the interaction of the ribosome with GTP-bound translation factors. This Brucella suis biovar 1 (strain 1330) protein is Large ribosomal subunit protein uL10.